The following is a 472-amino-acid chain: MASQLLNVPHLAFFPKISYASVFSTLKPSFFHSTSTRRALKSSPSSRIINLQAVAETSSEIESNSVTETTVPLTLRQICQGFVPEHILHRMEEIGFVFPTDIQREALPTLFTGRDCILHAQTGSGKTLTYLLLIFSLINPQRSSVQAVIVVPTRELGMQVTKVARMLAAKSEIDVKGCTVMALLDGGTLRRHKSWLKAEPPAILVATVASLCHMLEKHIFRIDSVRVLVVDEVDFLFYSSKQVGSVRKLLTSFSSCDKRQTVFASASIPQHKHFVHDCIQQKWTKRDVVHVHVSAIMPMPLCLLHRFVMCEKTNKHQVLLALLESDAPESAIIFVGEQSEKSKKAGNDPSTTLLMEFLKTSYKGSLEILLLEGDMNFNSRAASLTEIRQGGGFLLVSTDIAARGIDLPETTHIFNFDLPQTVTDYLHRAGRAGRKPFSDRKCIVANLITSEERFVLQRYENELMFSCEEMML.

The transit peptide at 1 to 54 directs the protein to the chloroplast; the sequence is MASQLLNVPHLAFFPKISYASVFSTLKPSFFHSTSTRRALKSSPSSRIINLQAV. Residues 76 to 104 carry the Q motif motif; the sequence is RQICQGFVPEHILHRMEEIGFVFPTDIQR. Residues 107–286 form the Helicase ATP-binding domain; sequence LPTLFTGRDC…DCIQQKWTKR (180 aa). An ATP-binding site is contributed by 120–127; it reads AQTGSGKT. A DEAD box motif is present at residues 231 to 234; it reads DEVD. The Helicase C-terminal domain occupies 314 to 472; sequence NKHQVLLALL…LMFSCEEMML (159 aa).

Belongs to the DEAD box helicase family.

It is found in the plastid. It localises to the chloroplast. The catalysed reaction is ATP + H2O = ADP + phosphate + H(+). The sequence is that of DEAD-box ATP-dependent RNA helicase 58, chloroplastic (RH58) from Arabidopsis thaliana (Mouse-ear cress).